A 447-amino-acid chain; its full sequence is Phosphoglucosamine mutase (447 aa).

S103 (phosphoserine intermediate) is an active-site residue. Residues S103, D242, D244, and D246 each contribute to the Mg(2+) site. Position 103 is a phosphoserine (S103).

This sequence belongs to the phosphohexose mutase family. The cofactor is Mg(2+). Post-translationally, activated by phosphorylation.

The enzyme catalyses alpha-D-glucosamine 1-phosphate = D-glucosamine 6-phosphate. Functionally, catalyzes the conversion of glucosamine-6-phosphate to glucosamine-1-phosphate. The chain is Phosphoglucosamine mutase from Marinobacter nauticus (strain ATCC 700491 / DSM 11845 / VT8) (Marinobacter aquaeolei).